Consider the following 127-residue polypeptide: Large ribosomal subunit protein bL21 (127 aa).

The tract at residues 102-127 is disordered; the sequence is TDNAKPTKGPRPKKAKAEAPAADAAE.

It belongs to the bacterial ribosomal protein bL21 family. Part of the 50S ribosomal subunit. Contacts protein L20.

Functionally, this protein binds to 23S rRNA in the presence of protein L20. In Bradyrhizobium sp. (strain BTAi1 / ATCC BAA-1182), this protein is Large ribosomal subunit protein bL21.